A 732-amino-acid polypeptide reads, in one-letter code: Calcineurin-interacting protein 2 (732 aa).

Disordered regions lie at residues 1-24, 115-169, 181-232, 310-351, 372-397, and 426-708; these read MNRG…REPY, DYEP…ALPK, QKKD…LDDR, ILSR…TSRR, RSQS…STVS, and QTVT…PLEE. The segment covering 8-17 has biased composition (polar residues); the sequence is YNRSRSTSSR. Basic and acidic residues predominate over residues 117-129; the sequence is EPLRKEPELKEQK. Composition is skewed to polar residues over residues 151-163 and 189-208; these read SGIT…SSRT and IPRQ…NNEL. Low complexity predominate over residues 312 to 323; that stretch reads SRSVSTSPSSVT. Over residues 324-351 the composition is skewed to polar residues; it reads DNIPKTSTSRIPSSENPKTMEHTTTSRR. Over residues 426 to 439 the composition is skewed to polar residues; it reads QTVTNVRVPSSRGS. 2 stretches are compositionally biased toward basic and acidic residues: residues 526–538 and 546–557; these read QSPE…RFAD and PGDHQAREEDLP. The span at 607–619 shows a compositional bias: polar residues; it reads SVTPSEKSLPRNS. Residues 688–705 are compositionally biased toward low complexity; it reads NSPNKSSSSSKARPSAAP.

Interacts with tax-6. Expressed in intestine.

In Caenorhabditis elegans, this protein is Calcineurin-interacting protein 2.